The chain runs to 375 residues: Serpin B5 (375 aa).

N-linked (GlcNAc...) asparagine glycans are attached at residues asparagine 99, asparagine 133, asparagine 188, asparagine 298, and asparagine 361.

It belongs to the serpin family. Ov-serpin subfamily. In terms of assembly, interacts with IRF6.

The protein resides in the secreted. It is found in the extracellular space. Functionally, tumor suppressor. It blocks the growth, invasion, and metastatic properties of mammary tumors. As it does not undergo the S (stressed) to R (relaxed) conformational transition characteristic of active serpins, it exhibits no serine protease inhibitory activity. In Rattus norvegicus (Rat), this protein is Serpin B5 (Serpinb5).